The chain runs to 235 residues: Large ribosomal subunit protein uL1 (235 aa).

This sequence belongs to the universal ribosomal protein uL1 family. Part of the 50S ribosomal subunit.

Its function is as follows. Binds directly to 23S rRNA. The L1 stalk is quite mobile in the ribosome, and is involved in E site tRNA release. Protein L1 is also a translational repressor protein, it controls the translation of the L11 operon by binding to its mRNA. In Paenarthrobacter aurescens (strain TC1), this protein is Large ribosomal subunit protein uL1.